The chain runs to 256 residues: Ubiquinone/menaquinone biosynthesis C-methyltransferase UbiE (256 aa).

Basic and acidic residues predominate over residues 1 to 12 (MTDPRKGDHAEP). Positions 1–21 (MTDPRKGDHAEPTTHFGYQDV) are disordered. S-adenosyl-L-methionine is bound by residues Thr79, Asp100, and 128–129 (DA).

Belongs to the class I-like SAM-binding methyltransferase superfamily. MenG/UbiE family.

It carries out the reaction a 2-demethylmenaquinol + S-adenosyl-L-methionine = a menaquinol + S-adenosyl-L-homocysteine + H(+). The catalysed reaction is a 2-methoxy-6-(all-trans-polyprenyl)benzene-1,4-diol + S-adenosyl-L-methionine = a 5-methoxy-2-methyl-3-(all-trans-polyprenyl)benzene-1,4-diol + S-adenosyl-L-homocysteine + H(+). The protein operates within quinol/quinone metabolism; menaquinone biosynthesis; menaquinol from 1,4-dihydroxy-2-naphthoate: step 2/2. It functions in the pathway cofactor biosynthesis; ubiquinone biosynthesis. In terms of biological role, methyltransferase required for the conversion of demethylmenaquinol (DMKH2) to menaquinol (MKH2) and the conversion of 2-polyprenyl-6-methoxy-1,4-benzoquinol (DDMQH2) to 2-polyprenyl-3-methyl-6-methoxy-1,4-benzoquinol (DMQH2). This is Ubiquinone/menaquinone biosynthesis C-methyltransferase UbiE from Pseudomonas entomophila (strain L48).